The chain runs to 427 residues: Glutamate-1-semialdehyde 2,1-aminomutase (427 aa).

At lysine 269 the chain carries N6-(pyridoxal phosphate)lysine.

This sequence belongs to the class-III pyridoxal-phosphate-dependent aminotransferase family. HemL subfamily. In terms of assembly, homodimer. Requires pyridoxal 5'-phosphate as cofactor.

Its subcellular location is the cytoplasm. It carries out the reaction (S)-4-amino-5-oxopentanoate = 5-aminolevulinate. The protein operates within porphyrin-containing compound metabolism; protoporphyrin-IX biosynthesis; 5-aminolevulinate from L-glutamyl-tRNA(Glu): step 2/2. The chain is Glutamate-1-semialdehyde 2,1-aminomutase from Thermus thermophilus (strain ATCC BAA-163 / DSM 7039 / HB27).